Reading from the N-terminus, the 301-residue chain is MSITQTNLDNILPLVARGKVRDIYEVDEKTLLFVATDRISAYDVIMENGIPQKGQLLTQLSEFWFEFLKPYIKTHLIEVDDIFAHLPKVLSEDRYKSQLQGGSLLVRKYKLVPLEVIVRGYITGSAWKVYKKSGTVHGVKAAEGLQESQEFPTPIFTPSTKAEQGEHDENISVEQAEAIVGKELADKIGKVAVELYSKAKGYAAGRGIIIADTKFEFGLDDDNELVLVDEVLTPDSSRFWNAKTYEVGKGQDSYDKQFLRDWLTSNGLAGKEGVSMTEDIATRSRVKYVEAYEALTGKKWE.

This sequence belongs to the SAICAR synthetase family.

It carries out the reaction 5-amino-1-(5-phospho-D-ribosyl)imidazole-4-carboxylate + L-aspartate + ATP = (2S)-2-[5-amino-1-(5-phospho-beta-D-ribosyl)imidazole-4-carboxamido]succinate + ADP + phosphate + 2 H(+). It participates in purine metabolism; IMP biosynthesis via de novo pathway; 5-amino-1-(5-phospho-D-ribosyl)imidazole-4-carboxamide from 5-amino-1-(5-phospho-D-ribosyl)imidazole-4-carboxylate: step 1/2. This is Phosphoribosylaminoimidazole-succinocarboxamide synthase (ADE1) from Cyberlindnera jadinii (Torula yeast).